Here is a 164-residue protein sequence, read N- to C-terminus: Sec-independent protein translocase protein TatB (164 aa).

The helical transmembrane segment at 1-21 threads the bilayer; the sequence is MIDIGLSKMALIGAVALIVIG. The disordered stretch occupies residues 81-102; it reads ASEFQKDWESGTSDAAATGHDG.

It belongs to the TatB family. As to quaternary structure, the Tat system comprises two distinct complexes: a TatABC complex, containing multiple copies of TatA, TatB and TatC subunits, and a separate TatA complex, containing only TatA subunits. Substrates initially bind to the TatABC complex, which probably triggers association of the separate TatA complex to form the active translocon.

Its subcellular location is the cell inner membrane. Functionally, part of the twin-arginine translocation (Tat) system that transports large folded proteins containing a characteristic twin-arginine motif in their signal peptide across membranes. Together with TatC, TatB is part of a receptor directly interacting with Tat signal peptides. TatB may form an oligomeric binding site that transiently accommodates folded Tat precursor proteins before their translocation. In Paracidovorax citrulli (strain AAC00-1) (Acidovorax citrulli), this protein is Sec-independent protein translocase protein TatB.